The following is a 334-amino-acid chain: Ketol-acid reductoisomerase (NADP(+)) (334 aa).

One can recognise a KARI N-terminal Rossmann domain in the interval 3 to 183 (ATIYYENDAD…GGTRGGVIET (181 aa)). NADP(+)-binding positions include 26–29 (YGSQ), Arg49, Ser52, and 84–87 (DEVQ). The active site involves His109. Gly135 is a binding site for NADP(+). Residues 184–329 (TFAEETETDL…LGLRRMMNWI (146 aa)) enclose the KARI C-terminal knotted domain. Residues Asp192, Glu196, Glu228, and Glu232 each coordinate Mg(2+). Ser253 contributes to the substrate binding site.

It belongs to the ketol-acid reductoisomerase family. It depends on Mg(2+) as a cofactor.

The catalysed reaction is (2R)-2,3-dihydroxy-3-methylbutanoate + NADP(+) = (2S)-2-acetolactate + NADPH + H(+). It catalyses the reaction (2R,3R)-2,3-dihydroxy-3-methylpentanoate + NADP(+) = (S)-2-ethyl-2-hydroxy-3-oxobutanoate + NADPH + H(+). The protein operates within amino-acid biosynthesis; L-isoleucine biosynthesis; L-isoleucine from 2-oxobutanoate: step 2/4. It functions in the pathway amino-acid biosynthesis; L-valine biosynthesis; L-valine from pyruvate: step 2/4. Its function is as follows. Involved in the biosynthesis of branched-chain amino acids (BCAA). Catalyzes an alkyl-migration followed by a ketol-acid reduction of (S)-2-acetolactate (S2AL) to yield (R)-2,3-dihydroxy-isovalerate. In the isomerase reaction, S2AL is rearranged via a Mg-dependent methyl migration to produce 3-hydroxy-3-methyl-2-ketobutyrate (HMKB). In the reductase reaction, this 2-ketoacid undergoes a metal-dependent reduction by NADPH to yield (R)-2,3-dihydroxy-isovalerate. The sequence is that of Ketol-acid reductoisomerase (NADP(+)) from Rhodopirellula baltica (strain DSM 10527 / NCIMB 13988 / SH1).